We begin with the raw amino-acid sequence, 167 residues long: Crossover junction endodeoxyribonuclease RuvC (167 aa).

Residues Asp11, Glu71, and Asp143 contribute to the active site. The Mg(2+) site is built by Asp11, Glu71, and Asp143.

Belongs to the RuvC family. As to quaternary structure, homodimer which binds Holliday junction (HJ) DNA. The HJ becomes 2-fold symmetrical on binding to RuvC with unstacked arms; it has a different conformation from HJ DNA in complex with RuvA. In the full resolvosome a probable DNA-RuvA(4)-RuvB(12)-RuvC(2) complex forms which resolves the HJ. The cofactor is Mg(2+).

It is found in the cytoplasm. The enzyme catalyses Endonucleolytic cleavage at a junction such as a reciprocal single-stranded crossover between two homologous DNA duplexes (Holliday junction).. Its function is as follows. The RuvA-RuvB-RuvC complex processes Holliday junction (HJ) DNA during genetic recombination and DNA repair. Endonuclease that resolves HJ intermediates. Cleaves cruciform DNA by making single-stranded nicks across the HJ at symmetrical positions within the homologous arms, yielding a 5'-phosphate and a 3'-hydroxyl group; requires a central core of homology in the junction. The consensus cleavage sequence is 5'-(A/T)TT(C/G)-3'. Cleavage occurs on the 3'-side of the TT dinucleotide at the point of strand exchange. HJ branch migration catalyzed by RuvA-RuvB allows RuvC to scan DNA until it finds its consensus sequence, where it cleaves and resolves the cruciform DNA. This is Crossover junction endodeoxyribonuclease RuvC from Acidiphilium cryptum (strain JF-5).